Reading from the N-terminus, the 266-residue chain is Undecaprenyl-diphosphatase (266 aa).

Transmembrane regions (helical) follow at residues 3 to 23, 41 to 61, 86 to 106, 108 to 128, 149 to 171, 184 to 204, 220 to 240, and 245 to 265; these read MSLL…FLPV, GTET…VVLY, VLVG…AIKA, LNTP…ILVI, FGVG…ATIM, AEYS…LALW, IGFV…LGVV, and FAPF…WLLA.

The protein belongs to the UppP family.

It is found in the cell inner membrane. It catalyses the reaction di-trans,octa-cis-undecaprenyl diphosphate + H2O = di-trans,octa-cis-undecaprenyl phosphate + phosphate + H(+). Functionally, catalyzes the dephosphorylation of undecaprenyl diphosphate (UPP). Confers resistance to bacitracin. This Rhizorhabdus wittichii (strain DSM 6014 / CCUG 31198 / JCM 15750 / NBRC 105917 / EY 4224 / RW1) (Sphingomonas wittichii) protein is Undecaprenyl-diphosphatase.